A 264-amino-acid polypeptide reads, in one-letter code: Teichoic acids export ATP-binding protein TagH (264 aa).

The region spanning 5-243 (VNIKNVTKEY…YEAFLNDFKK (239 aa)) is the ABC transporter domain. 57–64 (GINGSGKS) is a binding site for ATP.

Belongs to the ABC transporter superfamily. Teichoic acids exporter (TC 3.A.1.104.1) family. As to quaternary structure, the complex is composed of two ATP-binding proteins (TagH) and two transmembrane proteins (TagG).

Its subcellular location is the cell membrane. The enzyme catalyses ATP + H2O + teichoic acidSide 1 = ADP + phosphate + teichoic acidSide 2.. Its function is as follows. Part of the ABC transporter complex TagGH involved in teichoic acids export. Responsible for energy coupling to the transport system. The polypeptide is Teichoic acids export ATP-binding protein TagH (Staphylococcus aureus (strain Mu50 / ATCC 700699)).